The chain runs to 51 residues: Protein Tat (51 aa).

Over residues 1–25 the composition is skewed to polar residues; sequence EAETATKSCSGRQANQVSLPKQPAS. The interval 1–51 is disordered; the sequence is EAETATKSCSGRQANQVSLPKQPASQPRGDPTGPKESKKKVETETETDPVN. A Glycyl lysine isopeptide (Lys-Gly) (interchain with G-Cter in ubiquitin) cross-link involves residue K21. Positions 28–30 match the Cell attachment site motif; that stretch reads RGD. Basic and acidic residues predominate over residues 33-43; the sequence is GPKESKKKVET.

It belongs to the lentiviruses Tat family. In terms of assembly, interacts with host CCNT1. Associates with the P-TEFb complex composed at least of Tat, P-TEFb (CDK9 and CCNT1), TAR RNA, RNA Pol II. Recruits the HATs CREBBP, TAF1/TFIID, EP300, PCAF and GCN5L2. Interacts with host KAT5/Tip60; this interaction targets the latter to degradation. Interacts with the host deacetylase SIRT1. Interacts with host capping enzyme RNGTT; this interaction stimulates RNGTT. Binds to host KDR, and to the host integrins ITGAV/ITGB3 and ITGA5/ITGB1. Interacts with host KPNB1/importin beta-1 without previous binding to KPNA1/importin alpha-1. Interacts with EIF2AK2. Interacts with host nucleosome assembly protein NAP1L1; this interaction may be required for the transport of Tat within the nucleus, since the two proteins interact at the nuclear rim. Interacts with host C1QBP/SF2P32; this interaction involves lysine-acetylated Tat. Interacts with the host chemokine receptors CCR2, CCR3 and CXCR4. Interacts with host DPP4/CD26; this interaction may trigger an anti-proliferative effect. Interacts with host LDLR. Interacts with the host extracellular matrix metalloproteinase MMP1. Interacts with host PRMT6; this interaction mediates Tat's methylation. Interacts with, and is ubiquitinated by MDM2/Hdm2. Interacts with host PSMC3 and HTATIP2. Interacts with STAB1; this interaction may overcome SATB1-mediated repression of IL2 and IL2RA (interleukin) in T cells by binding to the same domain than HDAC1. Interacts (when acetylated) with human CDK13, thereby increasing HIV-1 mRNA splicing and promoting the production of the doubly spliced HIV-1 protein Nef. In terms of processing, acetylation by EP300, CREBBP, GCN5L2/GCN5 and PCAF regulates the transactivation activity of Tat. Post-translationally, phosphorylated by EIF2AK2 on serine and threonine residues adjacent to the basic region important for TAR RNA binding and function. Phosphorylation of Tat by EIF2AK2 is dependent on the prior activation of EIF2AK2 by dsRNA. Asymmetrical arginine methylation by host PRMT6 seems to diminish the transactivation capacity of Tat and affects the interaction with host CCNT1. In terms of processing, polyubiquitination by MDM2 does not target Tat to degradation, but activates its transactivation function and fosters interaction with CCNT1 and TAR RNA.

The protein resides in the host nucleus. Its subcellular location is the host nucleolus. It localises to the host cytoplasm. The protein localises to the secreted. Transcriptional activator that increases RNA Pol II processivity, thereby increasing the level of full-length viral transcripts. Recognizes a hairpin structure at the 5'-LTR of the nascent viral mRNAs referred to as the transactivation responsive RNA element (TAR) and recruits the cyclin T1-CDK9 complex (P-TEFb complex) that will in turn hyperphosphorylate the RNA polymerase II to allow efficient elongation. The CDK9 component of P-TEFb and other Tat-activated kinases hyperphosphorylate the C-terminus of RNA Pol II that becomes stabilized and much more processive. Other factors such as HTATSF1/Tat-SF1, SUPT5H/SPT5, and HTATIP2 are also important for Tat's function. Besides its effect on RNA Pol II processivity, Tat induces chromatin remodeling of proviral genes by recruiting the histone acetyltransferases (HATs) CREBBP, EP300 and PCAF to the chromatin. This also contributes to the increase in proviral transcription rate, especially when the provirus integrates in transcriptionally silent region of the host genome. To ensure maximal activation of the LTR, Tat mediates nuclear translocation of NF-kappa-B by interacting with host RELA. Through its interaction with host TBP, Tat may also modulate transcription initiation. Tat can reactivate a latently infected cell by penetrating in it and transactivating its LTR promoter. In the cytoplasm, Tat is thought to act as a translational activator of HIV-1 mRNAs. In terms of biological role, extracellular circulating Tat can be endocytosed by surrounding uninfected cells via the binding to several surface receptors such as CD26, CXCR4, heparan sulfate proteoglycans (HSPG) or LDLR. Neurons are rarely infected, but they internalize Tat via their LDLR. Endosomal low pH allows Tat to cross the endosome membrane to enter the cytosol and eventually further translocate into the nucleus, thereby inducing severe cell dysfunctions ranging from cell activation to cell death. Through its interaction with nuclear HATs, Tat is potentially able to control the acetylation-dependent cellular gene expression. Tat seems to inhibit the HAT activity of KAT5/Tip60 and TAF1, and consequently modify the expression of specific cellular genes. Modulates the expression of many cellular genes involved in cell survival, proliferation or in coding for cytokines (such as IL10) or cytokine receptors. May be involved in the derepression of host interleukin IL2 expression. Mediates the activation of cyclin-dependent kinases and dysregulation of microtubule network. Tat plays a role in T-cell and neurons apoptosis. Tat induced neurotoxicity and apoptosis probably contribute to neuroAIDS. Host extracellular matrix metalloproteinase MMP1 cleaves Tat and decreases Tat's mediated neurotoxicity. Circulating Tat also acts as a chemokine-like and/or growth factor-like molecule that binds to specific receptors on the surface of the cells, affecting many cellular pathways. In the vascular system, Tat binds to ITGAV/ITGB3 and ITGA5/ITGB1 integrins dimers at the surface of endothelial cells and competes with bFGF for heparin-binding sites, leading to an excess of soluble bFGF. Binds to KDR/VEGFR-2. All these Tat-mediated effects enhance angiogenesis in Kaposi's sarcoma lesions. The chain is Protein Tat from Homo sapiens (Human).